The chain runs to 162 residues: MAQRPSVPIAIIGNYISRRRQVSLEEAEALAQGLKCRFLGEVHAIRDGPYSYADGTLESILNLYRDAFFGDFDSETGEHRKEKEFKGEVLSSGLKDIAKQKRHKLANIFMNPKPPKYRSSTSLGGIATGCSPRSVVGVGGGNRCAHRPVCCTDNKFSECLPL.

2 disulfide bridges follow: Cys-36–Cys-150 and Cys-151–Cys-159.

This sequence belongs to the fungal hydrophobin family. In terms of assembly, self-assembles to form functional amyloid fibrils called rodlets. Self-assembly into fibrillar rodlets occurs spontaneously at hydrophobic:hydrophilic interfaces and the rodlets further associate laterally to form amphipathic monolayers.

It localises to the secreted. The protein resides in the cell wall. Its function is as follows. Aerial growth, conidiation, and dispersal of filamentous fungi in the environment rely upon a capability of their secreting small amphipathic proteins called hydrophobins (HPBs) with low sequence identity. Class I can self-assemble into an outermost layer of rodlet bundles on aerial cell surfaces, conferring cellular hydrophobicity that supports fungal growth, development and dispersal; whereas Class II form highly ordered films at water-air interfaces through intermolecular interactions but contribute nothing to the rodlet structure. The protein is Class I hydrophobin 3 of Coprinopsis cinerea (strain Okayama-7 / 130 / ATCC MYA-4618 / FGSC 9003) (Inky cap fungus).